Here is a 270-residue protein sequence, read N- to C-terminus: Putative pyruvate, phosphate dikinase regulatory protein (270 aa).

Position 148-155 (148-155) interacts with ADP; it reads GVSRTSKT.

The protein belongs to the pyruvate, phosphate/water dikinase regulatory protein family. PDRP subfamily.

The catalysed reaction is N(tele)-phospho-L-histidyl/L-threonyl-[pyruvate, phosphate dikinase] + ADP = N(tele)-phospho-L-histidyl/O-phospho-L-threonyl-[pyruvate, phosphate dikinase] + AMP + H(+). It carries out the reaction N(tele)-phospho-L-histidyl/O-phospho-L-threonyl-[pyruvate, phosphate dikinase] + phosphate + H(+) = N(tele)-phospho-L-histidyl/L-threonyl-[pyruvate, phosphate dikinase] + diphosphate. Its function is as follows. Bifunctional serine/threonine kinase and phosphorylase involved in the regulation of the pyruvate, phosphate dikinase (PPDK) by catalyzing its phosphorylation/dephosphorylation. This Bacillus cereus (strain B4264) protein is Putative pyruvate, phosphate dikinase regulatory protein.